Consider the following 365-residue polypeptide: Saoe class I histocompatibility antigen, C alpha chain (365 aa).

A signal peptide spans 1-24; that stretch reads MTIMAPRTLLLLLSGALSVTETWA. The tract at residues 25-114 is alpha-1; the sequence is GSHSMRYFST…LLGYYNQSEA (90 aa). Topologically, residues 25–308 are extracellular; the sequence is GSHSMRYFST…EPPSQPTIPI (284 aa). Residue N110 is glycosylated (N-linked (GlcNAc...) asparagine). The interval 115–206 is alpha-2; the sequence is GFHTIQWMYG…ENGKEMLQRA (92 aa). 2 cysteine pairs are disulfide-bonded: C125-C188 and C227-C283. An alpha-3 region spans residues 207–298; it reads EPPKTHVTHH…GLPEPFTLRW (92 aa). Residues 209-297 form the Ig-like C1-type domain; that stretch reads PKTHVTHHPV…EGLPEPFTLR (89 aa). The segment at 299 to 308 is connecting peptide; the sequence is EPPSQPTIPI. Residues 309–332 form a helical membrane-spanning segment; the sequence is MGIVAILAILGAVVTGAVVAAVMW. The Cytoplasmic portion of the chain corresponds to 333–365; sequence RKKSSDKKGGSYSQAARSDSAQGSDVSLTACKV. The tract at residues 337–365 is disordered; it reads SDKKGGSYSQAARSDSAQGSDVSLTACKV. Residues 346–359 show a composition bias toward polar residues; that stretch reads QAARSDSAQGSDVS. 2 positions are modified to phosphoserine: S356 and S359.

This sequence belongs to the MHC class I family. As to quaternary structure, heterodimer of an alpha chain and a beta chain (beta-2-microglobulin).

It localises to the membrane. Functionally, involved in the presentation of foreign antigens to the immune system. This chain is Saoe class I histocompatibility antigen, C alpha chain, found in Saguinus oedipus (Cotton-top tamarin).